The sequence spans 140 residues: Large ribosomal subunit protein uL11 (140 aa).

Belongs to the universal ribosomal protein uL11 family. As to quaternary structure, part of the ribosomal stalk of the 50S ribosomal subunit. Interacts with L10 and the large rRNA to form the base of the stalk. L10 forms an elongated spine to which L12 dimers bind in a sequential fashion forming a multimeric L10(L12)X complex. One or more lysine residues are methylated.

Forms part of the ribosomal stalk which helps the ribosome interact with GTP-bound translation factors. The sequence is that of Large ribosomal subunit protein uL11 from Gemmatimonas aurantiaca (strain DSM 14586 / JCM 11422 / NBRC 100505 / T-27).